The sequence spans 216 residues: Fibroblast growth factor 19 (216 aa).

An N-terminal signal peptide occupies residues 1 to 24 (MRSGCVVVHVWILAGLWLAVAGRP). 2 cysteine pairs are disulfide-bonded: C58/C70 and C102/C120.

Belongs to the heparin-binding growth factors family. In terms of assembly, interacts with FGFR1, FGFR2, FGFR3 and FGFR4. Affinity between fibroblast growth factors (FGFs) and their receptors is increased by KL, KLB and heparan sulfate glycosaminoglycans that function as coreceptors. Interacts with KL; this interaction is direct. Interacts with KLB; this interaction is direct. Interacts with FGFR4 in the presence of heparin, KL or KLB. Interacts with MALRD1. As to expression, expressed in fetal brain, cartilage, retina, and adult gall bladder.

It is found in the secreted. Involved in the suppression of bile acid biosynthesis through down-regulation of CYP7A1 expression, following positive regulation of the JNK and ERK1/2 cascades. Stimulates glucose uptake in adipocytes. Activity requires the presence of KLB and FGFR4. This is Fibroblast growth factor 19 (FGF19) from Homo sapiens (Human).